A 186-amino-acid polypeptide reads, in one-letter code: Ribosome-recycling factor (186 aa).

The tract at residues 144–163 (EKDGVIGQDESRAQSERVQK) is disordered.

Belongs to the RRF family.

It is found in the cytoplasm. Functionally, responsible for the release of ribosomes from messenger RNA at the termination of protein biosynthesis. May increase the efficiency of translation by recycling ribosomes from one round of translation to another. The polypeptide is Ribosome-recycling factor (Rhizobium johnstonii (strain DSM 114642 / LMG 32736 / 3841) (Rhizobium leguminosarum bv. viciae)).